A 432-amino-acid polypeptide reads, in one-letter code: Glutamyl-tRNA reductase (432 aa).

Substrate-binding positions include 55 to 58, Ser-114, 119 to 121, and Gln-125; these read TCNR and ETQ. Cys-56 (nucleophile) is an active-site residue. 194 to 199 contributes to the NADP(+) binding site; that stretch reads GAGEMI.

The protein belongs to the glutamyl-tRNA reductase family. In terms of assembly, homodimer.

The catalysed reaction is (S)-4-amino-5-oxopentanoate + tRNA(Glu) + NADP(+) = L-glutamyl-tRNA(Glu) + NADPH + H(+). The protein operates within porphyrin-containing compound metabolism; protoporphyrin-IX biosynthesis; 5-aminolevulinate from L-glutamyl-tRNA(Glu): step 1/2. Its function is as follows. Catalyzes the NADPH-dependent reduction of glutamyl-tRNA(Glu) to glutamate 1-semialdehyde (GSA). The protein is Glutamyl-tRNA reductase of Burkholderia orbicola (strain AU 1054).